A 57-amino-acid chain; its full sequence is UPF0057 membrane protein T23F2.4 (57 aa).

The next 2 helical transmembrane spans lie at 3–23 (ITCM…VGVF) and 36–56 (ILLT…IILA).

This sequence belongs to the UPF0057 (PMP3) family.

Its subcellular location is the membrane. This chain is UPF0057 membrane protein T23F2.4, found in Caenorhabditis elegans.